A 24-amino-acid chain; its full sequence is Acetylcholine receptor subunit alpha (24 aa).

The protein belongs to the ligand-gated ion channel (TC 1.A.9) family. Acetylcholine receptor (TC 1.A.9.1) subfamily. Alpha-1/CHRNA1 sub-subfamily. As to quaternary structure, one of the alpha chains that assemble within the acetylcholine receptor, a pentamer of two alpha chains, a beta, a delta, and a gamma or epsilon chains.

Its subcellular location is the postsynaptic cell membrane. It localises to the cell membrane. It carries out the reaction K(+)(in) = K(+)(out). It catalyses the reaction Na(+)(in) = Na(+)(out). Its function is as follows. Upon acetylcholine binding, the AChR responds by an extensive change in conformation that affects all subunits and leads to opening of an ion-conducting channel across the plasma membrane. In Electrophorus electricus (Electric eel), this protein is Acetylcholine receptor subunit alpha (chrna1).